The sequence spans 445 residues: 6-phosphogluconate dehydrogenase, decarboxylating (445 aa).

Residues 1-4, 22-24, 63-65, and Asn91 each bind NADP(+); these read AVMG, NRS, and VKA. Substrate is bound by residues Asn91 and 117 to 119; that span reads SGG. Lys172 acts as the Proton acceptor in catalysis. 175 to 176 contributes to the substrate binding site; that stretch reads HN. Glu179 (proton donor) is an active-site residue. Residues Tyr180, Lys249, Arg276, Arg434, and His440 each coordinate substrate.

The protein belongs to the 6-phosphogluconate dehydrogenase family. Homodimer.

The catalysed reaction is 6-phospho-D-gluconate + NADP(+) = D-ribulose 5-phosphate + CO2 + NADPH. It functions in the pathway carbohydrate degradation; pentose phosphate pathway; D-ribulose 5-phosphate from D-glucose 6-phosphate (oxidative stage): step 3/3. Functionally, catalyzes the oxidative decarboxylation of 6-phosphogluconate to ribulose 5-phosphate and CO(2), with concomitant reduction of NADP to NADPH. The chain is 6-phosphogluconate dehydrogenase, decarboxylating (gnd) from Raoultella terrigena (Klebsiella terrigena).